A 931-amino-acid chain; its full sequence is Netrin receptor UNC5C (931 aa).

Positions 1 to 40 (MRKGLRATAARCGLGLGYLLQMLVLPALALLSASGTGSAA) are cleaved as a signal peptide. The Extracellular portion of the chain corresponds to 41–380 (QDDDFFHELP…APDSDDVALY (340 aa)). The Ig-like domain occupies 62-159 (PHFLIEPEEA…AGTTKSRKAY (98 aa)). 9 disulfides stabilise this stretch: Cys83/Cys144, Cys95/Cys142, Cys188/Cys239, Cys272/Cys309, Cys276/Cys313, Cys287/Cys299, Cys328/Cys362, Cys332/Cys367, and Cys340/Cys352. Residues 161–256 (RIAYLRKTFE…KRKSTTATVI (96 aa)) form the Ig-like C2-type domain. Residue Asn236 is glycosylated (N-linked (GlcNAc...) asparagine). 2 consecutive TSP type-1 domains span residues 260-314 (NGGW…TLCP) and 316-368 (DGRW…GLCM). The N-linked (GlcNAc...) asparagine glycan is linked to Asn361. A helical membrane pass occupies residues 381 to 401 (VGIVIAVTVCLAITVVVALFV). Residues 402-931 (YRKNHRDFES…VVSLAAEGQY (530 aa)) lie on the Cytoplasmic side of the membrane. A required for netrin-mediated axon repulsion of neuronal growth cones region spans residues 402-931 (YRKNHRDFES…VVSLAAEGQY (530 aa)). Position 502 is a phosphoserine (Ser502). The ZU5 domain maps to 530–673 (CTAFGTFNSL…LSTYALVGQS (144 aa)). Tyr568 carries the post-translational modification Phosphotyrosine. Residues 694–712 (SLEYSIRVYCLDDTQDALK) form an interaction with DCC region. Residues 850–929 (QKLCSSLDAP…ETVVSLAAEG (80 aa)) form the Death domain.

Belongs to the unc-5 family. Interacts with DCC (via cytoplasmic domain). Interacts (tyrosine phosphorylated form) with PTPN11. Interacts (via extracellular domain) with FLRT3 (via extracellular domain). Interacts (via Ig-like C2-type domain) with DSCAM (via extracellular domain). Interacts (via death domain) with DAPK1. Interacts (via cytoplasmic domain) with TUBB3; this interaction is decreased by NTN1/Netrin-1. In terms of processing, proteolytically cleaved by caspases during apoptosis. The cleavage does not take place when the receptor is associated with netrin ligand. Its cleavage by caspases is required to induce apoptosis. Post-translationally, phosphorylated on different cytoplasmic tyrosine residues. Phosphorylation of Tyr-568 leads to an interaction with PTPN11 phosphatase, suggesting that its activity is regulated by phosphorylation/dephosphorylation. Tyrosine phosphorylation is netrin-dependent. In terms of tissue distribution, detected in brain (at protein level). Mainly expressed in brain. Also expressed in kidney. Not expressed in developing or adult lung.

Its subcellular location is the cell membrane. The protein localises to the cell surface. It localises to the synapse. The protein resides in the synaptosome. It is found in the cell projection. Its subcellular location is the axon. The protein localises to the dendrite. It localises to the growth cone. The protein resides in the lamellipodium. It is found in the filopodium. Receptor for netrin required for axon guidance. Mediates axon repulsion of neuronal growth cones in the developing nervous system upon ligand binding. NTN1/Netrin-1 binding might cause dissociation of UNC5C from polymerized TUBB3 in microtubules and thereby lead to increased microtubule dynamics and axon repulsion. Axon repulsion in growth cones may also be caused by its association with DCC that may trigger signaling for repulsion. Might also collaborate with DSCAM in NTN1-mediated axon repulsion independently of DCC. Also involved in corticospinal tract axon guidance independently of DCC. Involved in dorsal root ganglion axon projection towards the spinal cord. It also acts as a dependence receptor required for apoptosis induction when not associated with netrin ligand. The sequence is that of Netrin receptor UNC5C (Unc5c) from Rattus norvegicus (Rat).